The sequence spans 476 residues: Adenosylhomocysteinase (476 aa).

Positions 67, 142, and 202 each coordinate substrate. 203 to 205 (TTT) contacts NAD(+). Positions 232 and 236 each coordinate substrate. NAD(+)-binding positions include N237, 266–271 (GYGDVG), E289, N324, 345–347 (IGH), and N390.

It belongs to the adenosylhomocysteinase family. The cofactor is NAD(+).

The protein localises to the cytoplasm. The enzyme catalyses S-adenosyl-L-homocysteine + H2O = L-homocysteine + adenosine. Its pathway is amino-acid biosynthesis; L-homocysteine biosynthesis; L-homocysteine from S-adenosyl-L-homocysteine: step 1/1. Its function is as follows. May play a key role in the regulation of the intracellular concentration of adenosylhomocysteine. This is Adenosylhomocysteinase from Prochlorococcus marinus (strain MIT 9211).